The following is a 380-amino-acid chain: MSCPYAGNGNEHDDSAVPLSNEIGKIYGEYLMLDKVLDAQCMLSKEDKRPVHDEHLFIITHQAYELWFKQIIFEFDSIRDMLNAEVIDETKTLEIVKRLNRVVLILKLLVDQVPILETMTPLDFMDFRKYLAPASGFQSMQFRLIENKLGVLTEQRVKYNQKYSDVFGNDAQALNAIRNSEIEPSLLELVQRWLERTPGLEEDGFNFWQKFQQSVDQFLDAQVQSAMEEPVEQAKNYRLMDIEKRREVYRSIFDTAVHEALVKRGDRRFSHRALQGAIMITFYRDEPRFSQPHQLLTLLMDIDSLITKWRYNHVIMVQRMIGSQQLGTGGSSGYQYLRSTLSDRYKVFLDLFNLSTFLIPREAIPPLDESIRKKLINKSV.

Substrate-binding positions include 57 to 61 (FIITH) and Arg128. His313 contacts heme. A substrate-binding site is contributed by Thr328.

It belongs to the tryptophan 2,3-dioxygenase family. In terms of assembly, homotetramer. Dimer of dimers. Requires heme as cofactor.

The enzyme catalyses L-tryptophan + O2 = N-formyl-L-kynurenine. It functions in the pathway amino-acid degradation; L-tryptophan degradation via kynurenine pathway; L-kynurenine from L-tryptophan: step 1/2. It participates in pigment biosynthesis; ommochrome biosynthesis. In terms of biological role, heme-dependent dioxygenase that catalyzes the oxidative cleavage of the L-tryptophan (L-Trp) pyrrole ring and converts L-tryptophan to N-formyl-L-kynurenine. Catalyzes the oxidative cleavage of the indole moiety. In Drosophila willistoni (Fruit fly), this protein is Tryptophan 2,3-dioxygenase.